The following is a 251-amino-acid chain: Aliphatic sulfonates import ATP-binding protein SsuB (251 aa).

Residues 3–231 (VSINEVSKYF…PRSKNSESFQ (229 aa)) enclose the ABC transporter domain. 39 to 46 (GPSGCGKS) serves as a coordination point for ATP.

The protein belongs to the ABC transporter superfamily. Aliphatic sulfonates importer (TC 3.A.1.17.2) family. As to quaternary structure, the complex is composed of two ATP-binding proteins (SsuB), two transmembrane proteins (SsuC) and a solute-binding protein (SsuA).

It is found in the cell membrane. It catalyses the reaction ATP + H2O + aliphatic sulfonate-[sulfonate-binding protein]Side 1 = ADP + phosphate + aliphatic sulfonateSide 2 + [sulfonate-binding protein]Side 1.. In terms of biological role, part of the ABC transporter complex SsuABC involved in aliphatic sulfonates import. Responsible for energy coupling to the transport system. The chain is Aliphatic sulfonates import ATP-binding protein SsuB from Bacillus cereus (strain ZK / E33L).